We begin with the raw amino-acid sequence, 224 residues long: Artemin (224 aa).

Residues 1–39 form the signal peptide; it reads MELGLGEPTALSHCLRPRWQPALWPTLAALALLSSVTEA. A propeptide spanning residues 40-111 is cleaved from the precursor; that stretch reads SLDPMSRSPA…AALRGARAAR (72 aa). The tract at residues 41–124 is disordered; the sequence is LDPMSRSPAS…RSSRARATDA (84 aa). The segment covering 80–95 has biased composition (pro residues); sequence RPPPQSPQPAPPPPGP. Positions 96–116 are enriched in low complexity; that stretch reads ALQSPPAALRGARAARAGTRS. Cystine bridges form between Cys-127–Cys-192, Cys-154–Cys-220, and Cys-158–Cys-222. An N-linked (GlcNAc...) asparagine glycan is attached at Asn-206.

This sequence belongs to the TGF-beta family. GDNF subfamily. As to quaternary structure, homodimer; disulfide-linked. Interacts with GFRA3 coreceptor and RET: forms a 2:2:2 ternary complex composed of ARTN ligand, GFRA3 and RET receptor. In terms of tissue distribution, cochlea. Expressed at higher level in sesorineural epithelium than in the modiolus region or substantia nigra.

The protein resides in the secreted. In terms of biological role, growth factor that supports the survival of sensory and sympathetic peripheral neurons in culture and also supports the survival of dopaminergic neurons of the ventral mid-brain. Acts by binding to its coreceptor, GFRA3, leading to autophosphorylation and activation of the RET receptor. Strong attractant of gut hematopoietic cells thus promoting the formation Peyer's patch-like structures, a major component of the gut-associated lymphoid tissue. The polypeptide is Artemin (Artn) (Rattus norvegicus (Rat)).